The primary structure comprises 544 residues: Probable protein kinase UbiB (544 aa).

The region spanning 123–501 (DFDIKPLASA…KRQQAKGQFL (379 aa)) is the Protein kinase domain. ATP is bound by residues 129 to 137 (LASASIAQV) and K152. D287 acts as the Proton acceptor in catalysis. A helical transmembrane segment spans residues 515 to 537 (LLTSNITVLASISAATGAAFWLF).

Belongs to the ABC1 family. UbiB subfamily.

It localises to the cell inner membrane. It participates in cofactor biosynthesis; ubiquinone biosynthesis [regulation]. Its function is as follows. Is probably a protein kinase regulator of UbiI activity which is involved in aerobic coenzyme Q (ubiquinone) biosynthesis. This Aliivibrio fischeri (strain MJ11) (Vibrio fischeri) protein is Probable protein kinase UbiB.